An 89-amino-acid chain; its full sequence is GDVAAGASVFSANCAACHMGGRNVIVANKTLSKSDLAKYLKGFDDDAVAAVAYQVTNGKNAMPGFNGRLSPKQIEDVAAYVVDQAEKGW.

C14, C17, H18, and M62 together coordinate heme c.

This sequence belongs to the cytochrome c family. PetJ subfamily. Monomer. Homodimer, or even higher oligomerization, in crystal structures. Post-translationally, binds 1 heme c group covalently per subunit.

Its subcellular location is the cellular thylakoid lumen. Functionally, functions as an electron carrier between membrane-bound cytochrome b6-f and photosystem I in oxygenic photosynthesis. The protein is Cytochrome c6 (petJ) of Limnospira maxima (Arthrospira maxima).